The following is a 739-amino-acid chain: Probable beta-glucosidase L (739 aa).

The first 17 residues, 1-17 (MQTLFLSLLAAAVTVHA), serve as a signal peptide directing secretion. Residues asparagine 40 and asparagine 224 are each glycosylated (N-linked (GlcNAc...) asparagine). Residue aspartate 252 is part of the active site. An N-linked (GlcNAc...) asparagine glycan is attached at asparagine 398.

The protein belongs to the glycosyl hydrolase 3 family.

Its subcellular location is the secreted. It catalyses the reaction Hydrolysis of terminal, non-reducing beta-D-glucosyl residues with release of beta-D-glucose.. It functions in the pathway glycan metabolism; cellulose degradation. Its function is as follows. Beta-glucosidases are one of a number of cellulolytic enzymes involved in the degradation of cellulosic biomass. Catalyzes the last step releasing glucose from the inhibitory cellobiose. The chain is Probable beta-glucosidase L (bglL) from Aspergillus fumigatus (strain CBS 144.89 / FGSC A1163 / CEA10) (Neosartorya fumigata).